We begin with the raw amino-acid sequence, 736 residues long: Phosphoribosylformylglycinamidine synthase subunit PurL (736 aa).

Residue His-49 is part of the active site. Residues Tyr-52 and Lys-91 each coordinate ATP. Glu-93 provides a ligand contact to Mg(2+). Substrate is bound by residues 94–97 (SHNH) and Arg-116. The Proton acceptor role is filled by His-95. Asp-117 is a binding site for Mg(2+). Gln-240 contacts substrate. Residue Asp-268 participates in Mg(2+) binding. 312 to 314 (ESQ) lines the substrate pocket. Residues Asp-493 and Gly-530 each coordinate ATP. Asn-531 contributes to the Mg(2+) binding site. Ser-533 contacts substrate.

It belongs to the FGAMS family. As to quaternary structure, monomer. Part of the FGAM synthase complex composed of 1 PurL, 1 PurQ and 2 PurS subunits.

It localises to the cytoplasm. It carries out the reaction N(2)-formyl-N(1)-(5-phospho-beta-D-ribosyl)glycinamide + L-glutamine + ATP + H2O = 2-formamido-N(1)-(5-O-phospho-beta-D-ribosyl)acetamidine + L-glutamate + ADP + phosphate + H(+). Its pathway is purine metabolism; IMP biosynthesis via de novo pathway; 5-amino-1-(5-phospho-D-ribosyl)imidazole from N(2)-formyl-N(1)-(5-phospho-D-ribosyl)glycinamide: step 1/2. Its function is as follows. Part of the phosphoribosylformylglycinamidine synthase complex involved in the purines biosynthetic pathway. Catalyzes the ATP-dependent conversion of formylglycinamide ribonucleotide (FGAR) and glutamine to yield formylglycinamidine ribonucleotide (FGAM) and glutamate. The FGAM synthase complex is composed of three subunits. PurQ produces an ammonia molecule by converting glutamine to glutamate. PurL transfers the ammonia molecule to FGAR to form FGAM in an ATP-dependent manner. PurS interacts with PurQ and PurL and is thought to assist in the transfer of the ammonia molecule from PurQ to PurL. The chain is Phosphoribosylformylglycinamidine synthase subunit PurL from Rhodopseudomonas palustris (strain ATCC BAA-98 / CGA009).